The sequence spans 366 residues: Chalcone synthase B (366 aa).

Cys172 is a catalytic residue.

It belongs to the thiolase-like superfamily. Chalcone/stilbene synthases family.

It catalyses the reaction (E)-4-coumaroyl-CoA + 3 malonyl-CoA + 3 H(+) = 2',4,4',6'-tetrahydroxychalcone + 3 CO2 + 4 CoA. The protein operates within secondary metabolite biosynthesis; flavonoid biosynthesis. Functionally, the primary product of this enzyme is 4,2',4',6'-tetrahydroxychalcone (also termed naringenin-chalcone or chalcone) which can under specific conditions spontaneously isomerize into naringenin. In Ipomoea triloba (Trilobed morning glory), this protein is Chalcone synthase B (CHSB).